We begin with the raw amino-acid sequence, 1103 residues long: Retinal guanylyl cyclase 2 (1103 aa).

Residues 1 to 46 (MFLAPWPFSHLMLWFVTLGRQRGQHGLASFKLLWCLWLLVLMSLPL) form the signal peptide. Residues 47 to 465 (QVWAPPYKIG…DGRICQGGIN (419 aa)) lie on the Extracellular side of the membrane. Cysteine 104 and cysteine 132 are joined by a disulfide. Residues 466 to 490 (PTFALMVCLALLIALLSINGFAYFI) form a helical membrane-spanning segment. Over 491 to 1103 (RHRINKIQLI…FQRRKQKSSW (613 aa)) the chain is Cytoplasmic. The Protein kinase domain maps to 532–812 (FQITSEVQSG…DEIFNQFKTF (281 aa)). In terms of domain architecture, Guanylate cyclase spans 884 to 1014 (TLYFSDIVGF…DTVNTASRME (131 aa)).

The protein belongs to the adenylyl cyclase class-4/guanylyl cyclase family. In terms of assembly, homodimer. Interacts with RD3; promotes the exit of GUCY2F from the endoplasmic reticulum and its trafficking to the photoreceptor outer segments. There are 9 conserved cysteine residues in sensory guanylate cyclases, 6 in the extracellular domain, which may be involved in intra- or interchain disulfide bonds. In terms of tissue distribution, expressed specifically in retina.

It localises to the membrane. The protein resides in the photoreceptor outer segment membrane. It catalyses the reaction GTP = 3',5'-cyclic GMP + diphosphate. Activated by GUCA1B when free calcium ions concentration is low, and inhibited by GUCA1B when free calcium ions concentration is high. Inhibited by RD3. Its function is as follows. Responsible for the synthesis of cyclic GMP (cGMP) in rods and cones of photoreceptors. Plays an essential role in phototransduction, by mediating cGMP replenishment. May also participate in the trafficking of membrane-asociated proteins to the photoreceptor outer segment membrane. The chain is Retinal guanylyl cyclase 2 (GUCY2F) from Bos taurus (Bovine).